Consider the following 298-residue polypeptide: MAKKDEHLRKPEWLKIKLNTNENYTGLKKLMRENNLHTVCEEAKCPNIHECWAVRRTATFMILGSVCTRACRFCAVKTGLPTELDLQEPERVADSVALMNLKHAVITAVARDDQKDGGAGVFAETVRAIRRKSPFTTIEVLPSDMGGNYDNLKTLMDTRPDILNHNIETVRRLTPRVRARATYDRSLEFLRRAKEMQPDIPTKSSIMIGLGETKEEIIEVMDDLLANNVDIMAIGQYLQPSKKHLKVQKYYHPDEFAELKEIAMQKGFSHCEAGPLVRSSYHADEQVNEASKKRQAQA.

[4Fe-4S] cluster is bound by residues cysteine 40, cysteine 45, cysteine 51, cysteine 67, cysteine 71, cysteine 74, and serine 280. In terms of domain architecture, Radical SAM core spans 53–269 (AVRRTATFMI…KEIAMQKGFS (217 aa)).

This sequence belongs to the radical SAM superfamily. Lipoyl synthase family. It depends on [4Fe-4S] cluster as a cofactor.

It localises to the cytoplasm. The enzyme catalyses [[Fe-S] cluster scaffold protein carrying a second [4Fe-4S](2+) cluster] + N(6)-octanoyl-L-lysyl-[protein] + 2 oxidized [2Fe-2S]-[ferredoxin] + 2 S-adenosyl-L-methionine + 4 H(+) = [[Fe-S] cluster scaffold protein] + N(6)-[(R)-dihydrolipoyl]-L-lysyl-[protein] + 4 Fe(3+) + 2 hydrogen sulfide + 2 5'-deoxyadenosine + 2 L-methionine + 2 reduced [2Fe-2S]-[ferredoxin]. The protein operates within protein modification; protein lipoylation via endogenous pathway; protein N(6)-(lipoyl)lysine from octanoyl-[acyl-carrier-protein]. Its function is as follows. Catalyzes the radical-mediated insertion of two sulfur atoms into the C-6 and C-8 positions of the octanoyl moiety bound to the lipoyl domains of lipoate-dependent enzymes, thereby converting the octanoylated domains into lipoylated derivatives. In Bacillus velezensis (strain DSM 23117 / BGSC 10A6 / LMG 26770 / FZB42) (Bacillus amyloliquefaciens subsp. plantarum), this protein is Lipoyl synthase.